The following is a 363-amino-acid chain: Serpentine receptor class beta-18 (363 aa).

A run of 7 helical transmembrane segments spans residues 52–72, 92–112, 135–155, 172–192, 218–238, 276–296, and 303–323; these read LAQF…VVYI, MLLF…YHII, FRYT…CIYI, LILA…IIWV, KATI…IGLF, AALM…YNFL, and TIAT…LVIV.

This sequence belongs to the nematode receptor-like protein srb family.

The protein resides in the membrane. This chain is Serpentine receptor class beta-18 (srb-18), found in Caenorhabditis elegans.